A 280-amino-acid polypeptide reads, in one-letter code: MTLKQAFDSALKHLEAADTPSPRLSAELLLMFSLNCDRAYLFTYPERELTADEQARYDEAIARRCHGEPAQYITGHQEFYGRDFLVSPAVLIPRPETEHLIEAVLELAPREVRWEVLDVGTGSGCIAATLAKEFPRMKVTAVDISPEALQIAQANAARLEAQVEFRVSDLLSAIEPGRQFDMIVSNPPYVGECEADKVQRQVKDFEPHCAVFGGERGMDIIKRLAPQVWEHLKPGGWFLMEIGYSIADPVHEIMRDWTNFKVVPDLRGIPRVVVGRKPTS.

S-adenosyl-L-methionine-binding positions include 120–124 (GTGSG), Asp143, and Asn186. A substrate-binding site is contributed by 186–189 (NPPY).

Belongs to the protein N5-glutamine methyltransferase family. PrmC subfamily.

The catalysed reaction is L-glutaminyl-[peptide chain release factor] + S-adenosyl-L-methionine = N(5)-methyl-L-glutaminyl-[peptide chain release factor] + S-adenosyl-L-homocysteine + H(+). Functionally, methylates the class 1 translation termination release factors RF1/PrfA and RF2/PrfB on the glutamine residue of the universally conserved GGQ motif. In Koribacter versatilis (strain Ellin345), this protein is Release factor glutamine methyltransferase.